A 590-amino-acid chain; its full sequence is MFGDRRKTGGLNLNGRASIAITPTKRFTDYTGSTSVRKTDARPSLSQPRVSLFNTKNSSVAPRDVKSLVSLNGSKIYNFLVEYESSDAPSEQLIMKPRGKNDFIACFELIYQHLSKDYEFPRHERIEEEVSQIFKGLGYPYPLKNSYYQPMGSSHGYPHLLDALSWLIDIIRINSAVSEDTQNILFGDFMEQGKAQEKTLNYAWMTSTFRDYTNDRKAAENPSSSYWDDTKHRLRKYFEQSNEFEDMTKTAASALEMLNYECDEIEADKGNEASLKEEISRIRDDIRKAKDYLEQNLHVKQHMEKELAMVKSEQEEKISENEKVQKMVDDLKNKIELQKQIHGLTGKEVRQMNLDNNKDKEVVLEIQSELDRLSKETWKLKDEDFFKEQKSKFIHLAEQIMKILSGLNIQMNLEPLRAPTNERDLKDYWETLNKIWVPEISRQLHQRKLELETEQSRFSNKAVTAEERIQIQSETLCEAKKNEAREERIRRNERDSWKDARKHIEQRYEQLLNEKEVLLKQMKLDGSLEKEIEDETARMSATGEEHIQKRSQLEAGIRQILDLMVVEIAEIENKKIGFHVQCAGIEKAVL.

Coiled coils occupy residues 269–342 (KGNE…KQIH) and 450–525 (ELET…MKLD).

Belongs to the NDC80/HEC1 family. Component of the NDC80 complex, which is composed of at least ndc-80 and him-10. The NDC80 complex interacts with knl-1. Interacts with the RZZ complex components rod-1 (via N-terminus) and zwl-1.

The protein resides in the nucleus. The protein localises to the chromosome. Its subcellular location is the centromere. It localises to the kinetochore. It is found in the cytoplasm. The protein resides in the cytoskeleton. Functionally, acts as a component of the essential kinetochore-associated ndc-80 complex, which is required for chromosome segregation in mitosis and meiosis and spindle checkpoint activity. Plays a role in kinetochore assembly and recruits the checkpoint protein mdf-2 and the spindly-like protein spdl-1 to unattached kinetochores. Mediates the formation of end-on kinetochore-microtubule attachments through recruitment of spdl-1. The ndc-80 complex synergistically enhances the affinity of the ska-1 complex for microtubules and may allow the ndc-80 complex to track depolymerizing microtubules. The sequence is that of Kinetochore protein ndc-80 (ndc-80) from Caenorhabditis elegans.